The chain runs to 508 residues: 3-octaprenyl-4-hydroxybenzoate carboxy-lyase (508 aa).

A Mn(2+)-binding site is contributed by asparagine 178. Residues 181 to 183, 195 to 197, and 200 to 201 contribute to the prenylated FMN site; these read IYR, RWL, and RG. Glutamate 244 provides a ligand contact to Mn(2+). Aspartate 303 serves as the catalytic Proton donor.

It belongs to the UbiD family. Homohexamer. It depends on prenylated FMN as a cofactor. Mn(2+) is required as a cofactor.

It localises to the cell membrane. It catalyses the reaction a 4-hydroxy-3-(all-trans-polyprenyl)benzoate + H(+) = a 2-(all-trans-polyprenyl)phenol + CO2. The protein operates within cofactor biosynthesis; ubiquinone biosynthesis. In terms of biological role, catalyzes the decarboxylation of 3-octaprenyl-4-hydroxy benzoate to 2-octaprenylphenol, an intermediate step in ubiquinone biosynthesis. This is 3-octaprenyl-4-hydroxybenzoate carboxy-lyase from Cupriavidus taiwanensis (strain DSM 17343 / BCRC 17206 / CCUG 44338 / CIP 107171 / LMG 19424 / R1) (Ralstonia taiwanensis (strain LMG 19424)).